The chain runs to 161 residues: MVIEWGTALYQLLAFAVLLLILSKFALKPLLGVMQKRQDMINEQIDSAEQNRKEAEKLLAEQREEMQKARVEARELIENAKKAGEQQGQEMVRAAKEEAQRIHQQALAEIQNEKDQAVAALREQVASLSVLIAQKVIEKELDASEQDQLVQEYLKQASEEL.

Residues 2–22 traverse the membrane as a helical segment; sequence VIEWGTALYQLLAFAVLLLIL.

The protein belongs to the ATPase B chain family. In terms of assembly, F-type ATPases have 2 components, F(1) - the catalytic core - and F(0) - the membrane proton channel. F(1) has five subunits: alpha(3), beta(3), gamma(1), delta(1), epsilon(1). F(0) has three main subunits: a(1), b(2) and c(10-14). The alpha and beta chains form an alternating ring which encloses part of the gamma chain. F(1) is attached to F(0) by a central stalk formed by the gamma and epsilon chains, while a peripheral stalk is formed by the delta and b chains.

It localises to the cell membrane. F(1)F(0) ATP synthase produces ATP from ADP in the presence of a proton or sodium gradient. F-type ATPases consist of two structural domains, F(1) containing the extramembraneous catalytic core and F(0) containing the membrane proton channel, linked together by a central stalk and a peripheral stalk. During catalysis, ATP synthesis in the catalytic domain of F(1) is coupled via a rotary mechanism of the central stalk subunits to proton translocation. In terms of biological role, component of the F(0) channel, it forms part of the peripheral stalk, linking F(1) to F(0). In Shouchella clausii (strain KSM-K16) (Alkalihalobacillus clausii), this protein is ATP synthase subunit b.